A 671-amino-acid chain; its full sequence is Pescadillo homolog (671 aa).

Coiled coils occupy residues 294-323 (NQAQ…ELFR) and 548-584 (QALR…TRKM). The 87-residue stretch at 317–403 (KVRELFRGLT…LVLPVTGYRI (87 aa)) folds into the BRCT domain. 2 disordered regions span residues 552-577 (KAQE…VKRQ) and 634-671 (GLVN…KWVQ). Residues 634–651 (GLVNKRLEARRQRAEAKG) show a composition bias toward basic and acidic residues.

This sequence belongs to the pescadillo family.

Its subcellular location is the nucleus. The protein resides in the nucleolus. It localises to the nucleoplasm. Its function is as follows. Required for maturation of ribosomal RNAs and formation of the large ribosomal subunit. The polypeptide is Pescadillo homolog (Leishmania major).